Reading from the N-terminus, the 2151-residue chain is Polycystin-1-like protein 3 (2151 aa).

The N-terminal stretch at 1–20 (MLLQRRSWLWLYIRIGVILG) is a signal peptide. Residues 25–1073 (RKPSIREQHG…IKLLLHVTNN (1049 aa)) are Extracellular-facing. The C-type lectin domain occupies 34–142 (GGNSCYQLNR…CIEKHHFICQ (109 aa)). Disulfide bonds link Cys55–Cys141 and Cys116–Cys133. Asn89 is a glycosylation site (N-linked (GlcNAc...) asparagine). The segment covering 222 to 245 (SLTGRPQVTSDTLASSSPPQGTSD) has biased composition (polar residues). A disordered region spans residues 222 to 609 (SLTGRPQVTS…SSSPPWPVIT (388 aa)). The segment covering 246–348 (TPASSSPPQV…ASSSPPQGTS (103 aa)) has biased composition (low complexity). 2 stretches are compositionally biased toward polar residues: residues 349–363 (DTPA…TLDT) and 371–600 (QGTS…TPAS). N-linked (GlcNAc...) asparagine glycans are attached at residues Asn566, Asn579, Asn592, Asn913, and Asn951. In terms of domain architecture, GAIN-B spans 899-1061 (TSLNTSTDHF…FIVPRTVDVE (163 aa)). 2 cysteine pairs are disulfide-bonded: Cys1011–Cys1039 and Cys1026–Cys1041. The GPS stretch occupies residues 1011–1061 (CYFWDRYNRTWKSDGCQVGPKSTILKTQCLCDHLTFFSSDFFIVPRTVDVE). A stachel region spans residues 1045–1061 (TFFSSDFFIVPRTVDVE). The chain crosses the membrane as a helical span at residues 1074-1094 (PVGVSLLSSLLGFYILLAMWA). Topologically, residues 1095-1283 (SRKDREDMQK…NQFTRVQRLS (189 aa)) are cytoplasmic. The PLAT domain occupies 1119–1236 (SHYLIQVYTG…GNCERDRVFT (118 aa)). A helical membrane pass occupies residues 1284-1304 (CCMALLLCDMVINIMFWKMGG). Residues 1305–1320 (TTAKRGTEQLGPLAVT) are Extracellular-facing. Residues 1321 to 1341 (LSELLVSIQTSIILFPIHLIF) form a helical membrane-spanning segment. Over 1342 to 1533 (GRLFQLIHPP…FCLFRWLKCS (192 aa)) the chain is Cytoplasmic. The chain crosses the membrane as a helical span at residues 1534-1554 (CWLLLGVISLASAFFITLYSL). The Extracellular portion of the chain corresponds to 1555–1575 (ELDKDQATSWVISMMLSVLQD). The chain crosses the membrane as a helical span at residues 1576 to 1596 (IFISQPIKVIFLTLLFSLMAN). Over 1597–1665 (HMPWLNKDKE…KLTGGTLVQI (69 aa)) the chain is Cytoplasmic. The helical transmembrane segment at 1666–1676 (LFLTLLMTTVY) threads the bilayer. At 1677 to 1892 (SAKDSSRFFL…SLTSLQSSER (216 aa)) the chain is on the extracellular side. N-linked (GlcNAc) asparagine glycans are attached at residues Asn1712 and Asn1822. The chain crosses the membrane as a helical span at residues 1893–1921 (GFAWIVSQVVYYLLVCYYAFIQGCRLKRQ). Over 1922 to 1930 (RLAFFTRKR) the chain is Cytoplasmic. The helical transmembrane segment at 1931–1949 (NLLDTSIVLISFSILGLSM) threads the bilayer. The Extracellular portion of the chain corresponds to 1950 to 1980 (QSLSLLHKKMQQYHCDRDRFISFYEALRVNS). Residues 1981–2002 (AVTHLRGFLLLFATVRVWDLLR) form a helical membrane-spanning segment. Residues 2003-2019 (HHAQLQVINKTLSKAWD) are Cytoplasmic-facing. Residues 2020–2044 (EVLGFILIIVVLLSSYAMTFNLLFG) traverse the membrane as a helical segment. The segment at 2043 to 2081 (FGWSISDYQSFFRSIVTVVGLLMGTSKHKEVIALYPILG) is channel pore-region. Residues 2045–2077 (WSISDYQSFFRSIVTVVGLLMGTSKHKEVIALY) are Extracellular-facing. The helical transmembrane segment at 2078–2097 (PILGSLLVLSSIILMGLVII) threads the bilayer. Topologically, residues 2098–2151 (NLFVSAILIAFGKERKACEKEATLTDMLLQKLSSLLGIRLHQNPSEEHADNTGY) are cytoplasmic.

The protein belongs to the polycystin family. As to quaternary structure, heterotetramer with PKD2L1, composed of 3 subunit of PKD2L1 and 1 subunit of PKD1L3. In terms of processing, autoproteolytically processed at the GPS region of the GAIN-B domain; this cleavage modulates receptor activity. As to expression, expressed in a subset of taste receptor cells (type III taste cells) distinct from those involved in bitter, sweet and umami taste. Expressed in circumvallate and foliate taste buds, but not in surrounding non-gustatory lingual epithelium cells. Expressed in testis.

The protein resides in the cell membrane. It carries out the reaction Ca(2+)(in) = Ca(2+)(out). It catalyses the reaction Na(+)(in) = Na(+)(out). The enzyme catalyses K(+)(in) = K(+)(out). The catalysed reaction is Mg(2+)(in) = Mg(2+)(out). The non-selective cation channel is gated following an off-response property by acid: gated open after the removal of acid stimulus, but not during acid application. Non-selective cation channel activity is inhibited by capsaicin. Regulation of non-selective cation channel activity by external Ca(2+) is bimodal, first sensitizing and subsequently inactivating the current. The apo (closed) heterotetramer has an asymmetric selectivity filter (SF) guarded by Lys-2069 in absence of Ca(2+). However, Ca(2+)-entrance to the SF vestibule is accompanied by a swing motion of Lys-2069 on PKD1L3. Pore-forming subunit of a heterotetrameric, non-selective cation channel that is permeable to Ca(2+). Also shows permeability towards NA(1+), K(+) and Mg(2+). Heterotetrameric complex channel is activated by external low pH and Ca(2+), but opens only when the extracellular pH rises again and after the removal of acid stimulus. May act as a sour taste receptor in gustatory cells; however, its contribution to sour taste perception is unclear in vivo and may be indirect. The polypeptide is Polycystin-1-like protein 3 (Mus musculus (Mouse)).